The sequence spans 432 residues: Proteinase-activated receptor 1 (432 aa).

The first 21 residues, 1–21 (MGPRRLLLVAVGLSLCGPLLS), serve as a signal peptide directing secretion. A propeptide spans 22–45 (SRVPMRQPESERMYATPYATPNPR) (removed for receptor activation). The Extracellular portion of the chain corresponds to 46-109 (SFFLRNPSED…SGYLTSPWLT (64 aa)). N-linked (GlcNAc...) asparagine glycans are attached at residues Asn-69 and Asn-82. Residues 110-135 (LFIPSVYTFVFIVSLPLNILAIAVFV) traverse the membrane as a helical segment. The Cytoplasmic segment spans residues 136–144 (FRMKVKKPA). The chain crosses the membrane as a helical span at residues 145 to 164 (VVYMLHLAMADVLFVSVLPF). Residues 165–183 (KISYYFSGTDWQFGSGMCR) lie on the Extracellular side of the membrane. An intrachain disulfide couples Cys-182 to Cys-261. The chain crosses the membrane as a helical span at residues 184 to 205 (FATAACYCNMYASIMLMTVISI). Residues 206-225 (DRFLAVVYPIQSLSWRTLGR) are Cytoplasmic-facing. A helical membrane pass occupies residues 226–246 (ANFTCVVIWVMAIMGVVPLLL). The Extracellular segment spans residues 247 to 275 (KEQTTQVPGLNITTCHDVLNETLLHGFYS). N-linked (GlcNAc...) asparagine glycans are attached at residues Asn-257 and Asn-266. The chain crosses the membrane as a helical span at residues 276-295 (YYFSAFSAIFFLVPLIISTV). At 296–318 (CYTSIIRCLSSSAVANRSKKSRA) the chain is on the cytoplasmic side. Residues 319–341 (LFLSAAVFCIFIVCFGPTNVLLI) form a helical membrane-spanning segment. Topologically, residues 342–357 (VHYLLLSDSPGTETAY) are extracellular. The chain crosses the membrane as a helical span at residues 358–381 (FAYLLCVCVTSVASCIDPLIYYYA). Over 382-432 (SSECQKHLYSILCCRESSDSNSCNSTGQLMPSKMDTCSSHLNNSIYKKLLA) the chain is Cytoplasmic. Phosphoserine is present on Ser-425.

It belongs to the G-protein coupled receptor 1 family. In terms of processing, proteolytic cleavage by thrombin generates a new N-terminus that functions as a tethered ligand. Also proteolytically cleaved by cathepsin CTSG. Post-translationally, phosphorylated in the C-terminal tail; probably mediating desensitization prior to the uncoupling and internalization of the receptor. In terms of tissue distribution, expressed in primary cultured oligodendrocytes.

It is found in the cell membrane. Its function is as follows. High affinity receptor that binds the activated thrombin, leading to calcium release from intracellular stores. The thrombin-activated receptor signaling pathway is mediated through PTX-insensitive G proteins, activation of phospholipase C resulting in the production of 1D-myo-inositol 1,4,5-trisphosphate (InsP3) which binds to InsP3 receptors causing calcium release from the stores. In astrocytes, the calcium released into the cytosol allows the Ca(2+)-dependent release of L-glutamate into the synaptic cleft through BEST1, that targets the neuronal postsynaptic GRIN2A/NMDAR receptor resulting in the synaptic plasticity regulation. May play a role in platelets activation and in vascular development. Mediates up-regulation of pro-inflammatory cytokines, such as MCP-1/CCL2 and IL6, triggered by coagulation factor Xa (F10) in cardiac fibroblasts and umbilical vein endothelial cells. The sequence is that of Proteinase-activated receptor 1 from Rattus norvegicus (Rat).